The primary structure comprises 655 residues: Potassium voltage-gated channel subfamily A member 4 (655 aa).

Over 1 to 306 (MEVAMVSAES…LLFEYPESSS (306 aa)) the chain is Cytoplasmic. The tract at residues 24 to 153 (QARARERERL…SEEDHGDGCS (130 aa)) is disordered. The segment covering 36 to 50 (SRAAAAAAVAAATAA) has biased composition (low complexity). Over residues 81-90 (GSREEEATRT) the composition is skewed to basic and acidic residues. Over residues 91-100 (EKKKKLHHRQ) the composition is skewed to basic residues. At Ser123 the chain carries Phosphoserine. The segment covering 123–138 (SEEEEDEEEEEEEEEE) has biased composition (acidic residues). Residues 139-150 (GRFYYSEEDHGD) show a composition bias toward basic and acidic residues. A helical transmembrane segment spans residues 307 to 328 (PARGIAIVSVLVILISIVIFCL). Over 329–372 (ETLPEFRDDRDLIMALSAGGHSRLLNDTSAPHLENSGHTIFNDP) the chain is Extracellular. Asn354 carries an N-linked (GlcNAc...) asparagine glycan. Residues 373-394 (FFIVETVCIVWFSFEFVVRCFA) traverse the membrane as a helical segment. The Cytoplasmic segment spans residues 395 to 405 (CPSQALFFKNI). The chain crosses the membrane as a helical span at residues 406-426 (MNIIDIVSILPYFITLGTDLA). At 427-441 (QQQGGGNGQQQQAMS) the chain is on the extracellular side. The helical; Voltage-sensor transmembrane segment at 442-462 (FAILRIIRLVRVFRIFKLSRH) threads the bilayer. At 463-477 (SKGLQILGHTLRASM) the chain is on the cytoplasmic side. The interval 464-477 (KGLQILGHTLRASM) is S4-S5 linker. A helical membrane pass occupies residues 478–499 (RELGLLIFFLFIGVILFSSAVY). Topologically, residues 500–513 (FAEADEPTTHFQSI) are extracellular. Positions 514–525 (PDAFWWAVVTMT) form an intramembrane region, helical. The Selectivity filter motif lies at 526 to 531 (TVGYGD). An intramembrane segment occupies 526-533 (TVGYGDMK). Residues 534 to 540 (PITVGGK) lie on the Extracellular side of the membrane. Residues 541-569 (IVGSLCAIAGVLTIALPVPVIVSNFNYFY) form a helical membrane-spanning segment. Residues 570–655 (HRETENEEQT…SNAKAVETDV (86 aa)) are Cytoplasmic-facing. Ser601 is modified (phosphoserine; by PKA). A compositionally biased stretch (basic and acidic residues) spans 631 to 642 (CQGKGDDSETDK). The disordered stretch occupies residues 631 to 655 (CQGKGDDSETDKNNCSNAKAVETDV). The PDZ-binding motif lies at 653 to 655 (TDV).

This sequence belongs to the potassium channel family. A (Shaker) (TC 1.A.1.2) subfamily. Kv1.4/KCNA4 sub-subfamily. Homotetramer and heterotetramer of potassium channel proteins. Interacts with KCNAB1 and KCNAB2. Interacts with DLG1, DLG2 and DLG4 via their PDZ domains. Interacts with SIGMAR1. Part of a complex containing KCNA1, KCNAB1 and LGI1. Detected in a complex with KCNA1. Interacts with KCNA2. Interacts (via cytoplasmic N-terminal domain) with KCNRG. In terms of processing, N-glycosylated. As to expression, detected in brain (at protein level). Heart and brain.

It is found in the cell membrane. The protein localises to the cell projection. The protein resides in the axon. It catalyses the reaction K(+)(in) = K(+)(out). Functionally, voltage-gated potassium channel that mediates transmembrane potassium transport in excitable membranes. Forms tetrameric potassium-selective channels through which potassium ions pass in accordance with their electrochemical gradient. The channel alternates between opened and closed conformations in response to the voltage difference across the membrane. Can form functional homotetrameric channels and heterotetrameric channels that contain variable proportions of KCNA1, KCNA2, KCNA4, KCNA5, and possibly other family members as well; channel properties depend on the type of alpha subunits that are part of the channel. Channel properties are modulated by cytoplasmic beta subunits that regulate the subcellular location of the alpha subunits and promote rapid inactivation. In vivo, membranes probably contain a mixture of heteromeric potassium channel complexes, making it difficult to assign currents observed in intact tissues to any particular potassium channel family member. Homotetrameric KCNA4 forms a potassium channel that opens in response to membrane depolarization, followed by rapid spontaneous channel closure. Likewise, a heterotetrameric channel formed by KCNA1 and KCNA4 shows rapid inactivation. This is Potassium voltage-gated channel subfamily A member 4 (Kcna4) from Rattus norvegicus (Rat).